Consider the following 505-residue polypeptide: Maturase K (505 aa).

The protein belongs to the intron maturase 2 family. MatK subfamily.

Its subcellular location is the plastid. It localises to the chloroplast. Usually encoded in the trnK tRNA gene intron. Probably assists in splicing its own and other chloroplast group II introns. The protein is Maturase K of Blitum bonus-henricus (Good King Henry).